A 949-amino-acid chain; its full sequence is Leucine--tRNA ligase (949 aa).

The 'HIGH' region motif lies at 68–79 (PYPSGEGLHVGH). Positions 540 to 562 (VPDYSPVSFDPDDAGSEPSPPLG) are disordered. Residues 722–726 (KIGKS) carry the 'KMSKS' region motif. Residue Lys725 participates in ATP binding.

This sequence belongs to the class-I aminoacyl-tRNA synthetase family.

The protein resides in the cytoplasm. The enzyme catalyses tRNA(Leu) + L-leucine + ATP = L-leucyl-tRNA(Leu) + AMP + diphosphate. This chain is Leucine--tRNA ligase, found in Mycolicibacterium gilvum (strain PYR-GCK) (Mycobacterium gilvum (strain PYR-GCK)).